The primary structure comprises 1075 residues: DNA-directed RNA polymerase subunit beta (1075 aa).

Belongs to the RNA polymerase beta chain family. As to quaternary structure, in plastids the minimal PEP RNA polymerase catalytic core is composed of four subunits: alpha, beta, beta', and beta''. When a (nuclear-encoded) sigma factor is associated with the core the holoenzyme is formed, which can initiate transcription.

It localises to the plastid. Its subcellular location is the chloroplast. The enzyme catalyses RNA(n) + a ribonucleoside 5'-triphosphate = RNA(n+1) + diphosphate. DNA-dependent RNA polymerase catalyzes the transcription of DNA into RNA using the four ribonucleoside triphosphates as substrates. In Sorghum bicolor (Sorghum), this protein is DNA-directed RNA polymerase subunit beta.